The following is a 217-amino-acid chain: uncharacterized protein (217 aa).

This is an uncharacterized protein from Methanocaldococcus jannaschii (strain ATCC 43067 / DSM 2661 / JAL-1 / JCM 10045 / NBRC 100440) (Methanococcus jannaschii).